The following is a 508-amino-acid chain: Light-independent protochlorophyllide reductase subunit B (508 aa).

Aspartate 36 is a [4Fe-4S] cluster binding site. Residue aspartate 294 is the Proton donor of the active site. Residue 429–430 coordinates substrate; that stretch reads GM.

The protein belongs to the ChlB/BchB/BchZ family. Protochlorophyllide reductase is composed of three subunits; ChlL, ChlN and ChlB. Forms a heterotetramer of two ChlB and two ChlN subunits. [4Fe-4S] cluster is required as a cofactor.

The catalysed reaction is chlorophyllide a + oxidized 2[4Fe-4S]-[ferredoxin] + 2 ADP + 2 phosphate = protochlorophyllide a + reduced 2[4Fe-4S]-[ferredoxin] + 2 ATP + 2 H2O. Its pathway is porphyrin-containing compound metabolism; chlorophyll biosynthesis (light-independent). Component of the dark-operative protochlorophyllide reductase (DPOR) that uses Mg-ATP and reduced ferredoxin to reduce ring D of protochlorophyllide (Pchlide) to form chlorophyllide a (Chlide). This reaction is light-independent. The NB-protein (ChlN-ChlB) is the catalytic component of the complex. This is Light-independent protochlorophyllide reductase subunit B from Gloeothece citriformis (strain PCC 7424) (Cyanothece sp. (strain PCC 7424)).